The primary structure comprises 177 residues: Phycocyanin PC645 beta subunit (177 aa).

Tyr18 is a mesobiliverdin binding site. (2R,3E)-phycocyanobilin is bound by residues Lys28, Asn35, and Asp39. 3 residues coordinate 15,16-dihydrobiliverdin: Cys50, Asp54, and Cys61. Asn72, Arg77, Cys82, Arg84, and Asp85 together coordinate (2R,3E)-phycocyanobilin. Gln148 contributes to the 15,16-dihydrobiliverdin binding site. (2R,3E)-phycocyanobilin is bound by residues Pro154, Gly156, and Cys158.

It belongs to the phycobiliprotein family. As to quaternary structure, heterotetramer of 2 different alpha chains and 2 identical beta chains which form 2 alpha-beta heterodimers within the heterotetramer. Post-translationally, contains two phycocyanobilin chromophores, one mesobiliverdin chromophore and one 15,16-dihydrobiliverdin chromophore with binding mediated by both the alpha and beta subunits.

It localises to the plastid. It is found in the chloroplast thylakoid membrane. Functionally, light-harvesting photosynthetic tetrapyrrole chromophore-protein from the phycobiliprotein complex. This chain is Phycocyanin PC645 beta subunit, found in Chroomonas sp. (strain CCMP270).